The sequence spans 283 residues: uncharacterized protein (283 aa).

The next 3 membrane-spanning stretches (helical) occupy residues 24 to 44 (LFGY…GMFI), 64 to 84 (TIAG…TLIA), and 96 to 116 (VIAI…GSLS).

It belongs to the MscS (TC 1.A.23) family.

It localises to the cell membrane. This is an uncharacterized protein from Buchnera aphidicola subsp. Schizaphis graminum (strain Sg).